A 454-amino-acid polypeptide reads, in one-letter code: MVEILDRTYGAQFPEELECHLDLQNASANCCKFNRWGSIVAVGCTDGRVLIYDFMTRNIARTFSAHCLPVSCLSWSRDGRKLLTSSADNSIAMFDVLAGTLLHRIRFNSMVTFAMFHPRNDNKAIVLQVNKQPTVEQFSPRIQTVLANDTPGSSDESASCVSYDRKGKYIIAGTGKGKLLIYNAETLKCVAWCKQNTVQQIRQIIVPMKSRFIITNTQDRVIRTYELEDLLHQRGQMVEAKYKVLDMVNKAAWKNVCTDSDGLYVCGASTKAHSLYIWESNTGSLIKILHGNKGEALLDVQWHPTRPIILSIAQGTVSMWTQAHVENWSAFAPEFQELEENEKYIEKENEFDMEDEDADEDMTSKSQDAEDDIIDVVNVRPEDYLASSDEEDCNIMKPARNLESGPLWYIPVPLDIENADNDQRLPDDIRNLDNLLNPAWVASAKGYELSPKSK.

WD repeat units lie at residues 23–64 (LQNA…RTFS), 65–104 (AHCLPVSCLSWSRDGRKLLTSSADNSIAMFDVLAGTLLHR), 153–192 (SSDESASCVSYDRKGKYIIAGTGKGKLLIYNAETLKCVAW), 196–235 (NTVQQIRQIIVPMKSRFIITNTQDRVIRTYELEDLLHQRG), 248–288 (VNKA…LIKI), and 292–330 (NKGEALLDVQWHPTRPIILSIAQGTVSMWTQAHVENWSA).

As to quaternary structure, component of the SET2 complex (also known as the SET1/COMPASS complex), which contains at least set-2, swd-2.1, cfp-1, rbbp-5, wdr-5.1, dpy-30 and ash-2.

It localises to the nucleus. Functionally, required for di- and trimethylation at 'Lys-4' of histone H3. Regulates left/right asymmetry of ASE sensory neurons, via its role as a component of the SET2 complex. This is Retinoblastoma-binding protein homolog 5 (rbbp-5) from Caenorhabditis elegans.